Reading from the N-terminus, the 207-residue chain is MFKFTEHNGVVAPLNISNIDTDAIIPKQFLQKVNKIGFGKYLFHDWRFIDKNQLKINPNFILNNYVYKNASILLTRENFGCGSSREHAVWSLLDYGFKVIISSSFSDIFFNNSFNNKLLLVVLEKKHIDYLFNLVDTKIGISFNVSLINKKITAGDLDIPFQIDDFQRLCLLNNWDNIDLTMKINHKIKSYEDNISSFLLERQEFTS.

This sequence belongs to the LeuD family. LeuD type 1 subfamily. In terms of assembly, heterodimer of LeuC and LeuD.

It catalyses the reaction (2R,3S)-3-isopropylmalate = (2S)-2-isopropylmalate. The protein operates within amino-acid biosynthesis; L-leucine biosynthesis; L-leucine from 3-methyl-2-oxobutanoate: step 2/4. Its function is as follows. Catalyzes the isomerization between 2-isopropylmalate and 3-isopropylmalate, via the formation of 2-isopropylmaleate. In Buchnera aphidicola subsp. Rhopalosiphum padi, this protein is 3-isopropylmalate dehydratase small subunit (leuD).